An 87-amino-acid chain; its full sequence is Dynein light chain 1, cytoplasmic (87 aa).

This sequence belongs to the dynein light chain family. In terms of assembly, homodimer. Cytoplasmic dynein consists of two catalytic heavy chains (HCs) and a number of non-catalytic subunits which present intermediate chains (ICs), light intermediate chains (LICs) and light chains (LCs). Component of the nuclear pore complex (NPC). NPC constitutes the exclusive means of nucleocytoplasmic transport. NPCs allow the passive diffusion of ions and small molecules and the active, nuclear transport receptor-mediated bidirectional transport of macromolecules such as proteins, RNAs, ribonucleoparticles (RNPs), and ribosomal subunits across the nuclear envelope. Due to its 8-fold rotational symmetry, all subunits are present with 8 copies or multiples thereof.

It localises to the cytoplasm. Its subcellular location is the cytoskeleton. The protein resides in the nucleus. It is found in the nuclear pore complex. In terms of biological role, acts as one of several non-catalytic accessory components of the cytoplasmic dynein complex that are thought to be involved in linking dynein to cargos and to adapter proteins that regulate dynein function. Cytoplasmic dynein 1 acts as a motor for the intracellular retrograde motility of vesicles and organelles along microtubules. May play a role in changing or maintaining the spatial distribution of cytoskeletal structures. Also a component of the nuclear pore complex. The chain is Dynein light chain 1, cytoplasmic (DYN2) from Kluyveromyces lactis (strain ATCC 8585 / CBS 2359 / DSM 70799 / NBRC 1267 / NRRL Y-1140 / WM37) (Yeast).